Consider the following 277-residue polypeptide: 3-methyl-2-oxobutanoate hydroxymethyltransferase (277 aa).

Aspartate 49 and aspartate 88 together coordinate Mg(2+). Residues 49-50, aspartate 88, and lysine 118 contribute to the 3-methyl-2-oxobutanoate site; that span reads DS. Mg(2+) is bound at residue glutamate 120. Glutamate 186 acts as the Proton acceptor in catalysis.

Belongs to the PanB family. In terms of assembly, homodecamer; pentamer of dimers. Mg(2+) is required as a cofactor.

Its subcellular location is the cytoplasm. The enzyme catalyses 3-methyl-2-oxobutanoate + (6R)-5,10-methylene-5,6,7,8-tetrahydrofolate + H2O = 2-dehydropantoate + (6S)-5,6,7,8-tetrahydrofolate. It functions in the pathway cofactor biosynthesis; (R)-pantothenate biosynthesis; (R)-pantoate from 3-methyl-2-oxobutanoate: step 1/2. In terms of biological role, catalyzes the reversible reaction in which hydroxymethyl group from 5,10-methylenetetrahydrofolate is transferred onto alpha-ketoisovalerate to form ketopantoate. The sequence is that of 3-methyl-2-oxobutanoate hydroxymethyltransferase from Cereibacter sphaeroides (strain ATCC 17029 / ATH 2.4.9) (Rhodobacter sphaeroides).